Reading from the N-terminus, the 140-residue chain is Small ribosomal subunit protein uS12m (140 aa).

The protein belongs to the universal ribosomal protein uS12 family.

The protein resides in the mitochondrion. This is Small ribosomal subunit protein uS12m (mrps12) from Dictyostelium citrinum (Slime mold).